Reading from the N-terminus, the 432-residue chain is Benzoyl-CoA reductase subunit B (432 aa).

Belongs to the FldB/FldC dehydratase alpha/beta subunit family. Heterotetramer composed of A, B, C, and D subunits. It depends on iron-sulfur cluster as a cofactor. An oxidized flavin serves as cofactor.

The enzyme catalyses cyclohexa-1,5-diene-1-carbonyl-CoA + oxidized 2[4Fe-4S]-[ferredoxin] + 2 ADP + 2 phosphate = reduced 2[4Fe-4S]-[ferredoxin] + benzoyl-CoA + 2 ATP + 2 H2O. The catalysed reaction is 3-hydroxybenzoyl-CoA + AH2 + 2 ATP + 2 H2O = 3-hydroxycyclohexa-1,5-diene-1-carbonyl-CoA + A + 2 ADP + 2 phosphate + 2 H(+). Catalyzes the anaerobic reduction of benzoyl-CoA and 3-hydroxybenzoyl-CoA to form cyclohexa-1,5-diene-1-carbonyl-CoA and 3-hydroxycyclohexa-1,5-diene-1-carbonyl-CoA, respectively. The enzyme also reduces other benzoyl-CoA analogs with small substituents at the aromatic ring. The chain is Benzoyl-CoA reductase subunit B (bcrB) from Thauera aromatica.